Reading from the N-terminus, the 132-residue chain is ATP synthase epsilon chain (132 aa).

Belongs to the ATPase epsilon chain family. As to quaternary structure, F-type ATPases have 2 components, CF(1) - the catalytic core - and CF(0) - the membrane proton channel. CF(1) has five subunits: alpha(3), beta(3), gamma(1), delta(1), epsilon(1). CF(0) has three main subunits: a, b and c.

The protein resides in the cell inner membrane. In terms of biological role, produces ATP from ADP in the presence of a proton gradient across the membrane. The protein is ATP synthase epsilon chain of Anaeromyxobacter dehalogenans (strain 2CP-C).